Reading from the N-terminus, the 482-residue chain is Thymidine phosphorylase (482 aa).

Positions 1-10 (MAALMTPGTG) are excised as a propeptide. The disordered stretch occupies residues 1–36 (MAALMTPGTGAPPAPGDFSGEGSQGLPDPSPEPKQL). Residue Thr6 is modified to Phosphothreonine. Substrate-binding residues include His116, Arg202, Ser217, and Lys221. R-V-A-A-A-L-X(5,6)-L-G-R repeat units follow at residues 265-279 (RVAA…PLGR) and 329-342 (RVAA…ALGR). R-A-L-X-X-A-L-V-L repeat units follow at residues 393–401 (RALPLALVL) and 453–461 (RALQEALVL).

This sequence belongs to the thymidine/pyrimidine-nucleoside phosphorylase family. As to quaternary structure, homodimer.

The enzyme catalyses thymidine + phosphate = 2-deoxy-alpha-D-ribose 1-phosphate + thymine. It participates in pyrimidine metabolism; dTMP biosynthesis via salvage pathway; dTMP from thymine: step 1/2. Functionally, may have a role in maintaining the integrity of the blood vessels. Has growth promoting activity on endothelial cells, angiogenic activity in vivo and chemotactic activity on endothelial cells in vitro. Catalyzes the reversible phosphorolysis of thymidine. The produced molecules are then utilized as carbon and energy sources or in the rescue of pyrimidine bases for nucleotide synthesis. In Homo sapiens (Human), this protein is Thymidine phosphorylase.